The following is a 217-amino-acid chain: Ribosomal RNA small subunit methyltransferase G (217 aa).

S-adenosyl-L-methionine-binding positions include Gly-78, Phe-83, Gly-129 to Glu-130, and Arg-146.

It belongs to the methyltransferase superfamily. RNA methyltransferase RsmG family.

The protein localises to the cytoplasm. It catalyses the reaction guanosine(527) in 16S rRNA + S-adenosyl-L-methionine = N(7)-methylguanosine(527) in 16S rRNA + S-adenosyl-L-homocysteine. Specifically methylates the N7 position of guanine in position 527 of 16S rRNA. This chain is Ribosomal RNA small subunit methyltransferase G, found in Geobacter sulfurreducens (strain ATCC 51573 / DSM 12127 / PCA).